We begin with the raw amino-acid sequence, 773 residues long: Leucine-rich repeat-containing protein let-4 (773 aa).

The signal sequence occupies residues 1–20 (MRLLLCLLLFSTLLINSTNA). At 21–689 (CPGVITQACF…RLEKSFFTTT (669 aa)) the chain is on the extracellular side. LRR repeat units lie at residues 61 to 84 (VGLIQSLTMNQAELVELPPNFFSG), 85 to 107 (LFIRRLDLSQNKIKKIDDAAFAG), 109 to 132 (NPVLEEVVLNHNLIEKVPAAALAG), 133 to 157 (LPNLLRLDLSNNSIVEIQEQEIFPN), 159 to 181 (NKLYDINLGSNKIFSIHTSTFQN), 183 to 206 (KNSIQTINLGHNNMTAVPSSAIRG), 207 to 230 (LKQLQSLHLHKNRIEQLDALNFLN), 231 to 254 (LPVLNLLNLAGNQIHELNRQAFLN), 256 to 278 (PSLRYLYLSGNKITKLTAYQFQT), 279 to 302 (FEQLEMLDLTNNEIGAIPANSLSG), 303 to 326 (LKQLRQLYLAHNKISNISSNAFTN), 328 to 349 (SIVVLVLSSNELKTLTAGIISG), 350 to 373 (LPNLQQVSFRDNQIKTINRNAFYD), 375 to 397 (ASLVMLDLAKNQLTEIAPTTFLA), 399 to 421 (LNLLLVDLSENKLPKTPYSAFNS), and 486 to 516 (LVQIPKMQIHRNVHTTTGDQAPQIPSGAFQQ). A helical membrane pass occupies residues 690-710 (IIFICVGTAVIVLVVVIAGLC). At 711-773 (ISKHRQLQFE…PGSSYCNYYK (63 aa)) the chain is on the cytoplasmic side.

As to expression, in L1 larvae, expressed in a subset of epithelial cells including epidermal, vulval and rectal cells and the excretory duct and pore. Absent from internal epithelia such as the gut and pharyngeal tubes. Transiently expressed in the excretory canal cell at the 1.5-fold embryonic stage but no longer visible in this cell at hatching.

The protein localises to the apical cell membrane. Required for apical extracellular matrix organization and epithelial junction maintenance. The chain is Leucine-rich repeat-containing protein let-4 (let-4) from Caenorhabditis elegans.